The sequence spans 139 residues: Small ribosomal subunit protein uS12 (139 aa).

Position 102 is a 3-methylthioaspartic acid (aspartate 102).

Belongs to the universal ribosomal protein uS12 family. As to quaternary structure, part of the 30S ribosomal subunit. Contacts proteins S8 and S17. May interact with IF1 in the 30S initiation complex.

Its function is as follows. With S4 and S5 plays an important role in translational accuracy. Functionally, interacts with and stabilizes bases of the 16S rRNA that are involved in tRNA selection in the A site and with the mRNA backbone. Located at the interface of the 30S and 50S subunits, it traverses the body of the 30S subunit contacting proteins on the other side and probably holding the rRNA structure together. The combined cluster of proteins S8, S12 and S17 appears to hold together the shoulder and platform of the 30S subunit. The chain is Small ribosomal subunit protein uS12 from Bacillus pumilus (strain SAFR-032).